The following is a 1070-amino-acid chain: DNA-directed RNA polymerase subunit beta (1070 aa).

It belongs to the RNA polymerase beta chain family. In plastids the minimal PEP RNA polymerase catalytic core is composed of four subunits: alpha, beta, beta', and beta''. When a (nuclear-encoded) sigma factor is associated with the core the holoenzyme is formed, which can initiate transcription.

It localises to the plastid. The protein resides in the chloroplast. The enzyme catalyses RNA(n) + a ribonucleoside 5'-triphosphate = RNA(n+1) + diphosphate. DNA-dependent RNA polymerase catalyzes the transcription of DNA into RNA using the four ribonucleoside triphosphates as substrates. The sequence is that of DNA-directed RNA polymerase subunit beta from Platanus occidentalis (Sycamore).